The following is a 529-amino-acid chain: F-box/LRR-repeat protein At5g63520 (529 aa).

The segment at 1–22 (MAEVSLTKKEMTTKGKSENSKK) is disordered. Residues 31-78 (VPIAAMNEDLLHNILLRLPAKSFAFASCVNRFWSSVCNRILSRPKMIS) enclose the F-box domain. LRR repeat units follow at residues 265-288 (GNEP…IFAR) and 418-441 (QVYL…LRNL).

The protein is F-box/LRR-repeat protein At5g63520 of Arabidopsis thaliana (Mouse-ear cress).